The following is a 222-amino-acid chain: Uracil-DNA glycosylase (222 aa).

The active-site Proton acceptor is Asp-61.

This sequence belongs to the uracil-DNA glycosylase (UDG) superfamily. UNG family.

It localises to the cytoplasm. It carries out the reaction Hydrolyzes single-stranded DNA or mismatched double-stranded DNA and polynucleotides, releasing free uracil.. In terms of biological role, excises uracil residues from the DNA which can arise as a result of misincorporation of dUMP residues by DNA polymerase or due to deamination of cytosine. This chain is Uracil-DNA glycosylase, found in Actinobacillus succinogenes (strain ATCC 55618 / DSM 22257 / CCUG 43843 / 130Z).